The chain runs to 209 residues: Mitotic spindle checkpoint protein MAD2 (209 aa).

The region spanning His15–Val198 is the HORMA domain.

Belongs to the MAD2 family. As to quaternary structure, part of the mitotic checkpoint complex (MCC); interacts with MAD1, CDC20-1, CDC20-2 and CDC20-5. Interacts with BUBR1 at chromocenters and with BUB3.1. Interacts with EIF4B3. In terms of tissue distribution, expressed in actively dividing tissues, early in organ development, in young leaves, lateral root primordia and root meristems.

Its subcellular location is the nucleus. The protein localises to the nucleus envelope. It is found in the chromosome. The protein resides in the centromere. It localises to the kinetochore. Its subcellular location is the cytoplasm. The protein localises to the cytoskeleton. It is found in the spindle. Functionally, required for the execution of the mitotic checkpoint which monitors the process of kinetochore-spindle attachment and delays the onset of anaphase when this process is not complete. It inhibits the activity of the anaphase promoting complex by sequestering CDC20 until all chromosomes are aligned at the metaphase plate. This chain is Mitotic spindle checkpoint protein MAD2, found in Arabidopsis thaliana (Mouse-ear cress).